Reading from the N-terminus, the 431-residue chain is MSNVGTPRTAQEIQQDWDTNPRWNGITRDYTAEQVAELQGSVVEEHTLAKRGAEILWDAVSAEGDDYINALGALTGNQAVQQVRAGLKAVYLSGWQVAGDANLAGHTYPDQSLYPANSVPNVVRRINNALLRADEIARVEGDTSVDNWLVPIVADGEAGFGGALNVYELQKGMITAGAAGTHWEDQLASEKKCGHLGGKVLIPTQQHIRTLNSARLAADVANTPTVVIARTDAEAATLITSDVDERDRPFITGERTAEGYYHVKPGLEPCIARAKSYAPYADMIWMETGTPDLELAKKFAEGVRSEFPDQLLSYNCSPSFNWSAHLEADEIAKFQKELGAMGFKFQFITLAGFHSLNYGMFDLAYGYAREGMPAFVDLQNREFKAAEERGFTAVKHQREVGAGYFDTIATTVDPNSSTTALKGSTEEGQFH.

Positions Met-1–Pro-21 are disordered. Residue Ser-93 to Trp-95 participates in substrate binding. Asp-155 provides a ligand contact to Mg(2+). The Proton acceptor role is filled by Cys-193. Substrate contacts are provided by residues Gly-194–His-195, Arg-230, Asn-315–Ser-319, and Thr-349.

This sequence belongs to the isocitrate lyase/PEP mutase superfamily. Isocitrate lyase family. As to quaternary structure, homotetramer. It depends on Mg(2+) as a cofactor.

The enzyme catalyses D-threo-isocitrate = glyoxylate + succinate. It functions in the pathway carbohydrate metabolism; glyoxylate cycle; (S)-malate from isocitrate: step 1/2. Its function is as follows. Involved in the metabolic adaptation in response to environmental changes. Catalyzes the reversible formation of succinate and glyoxylate from isocitrate, a key step of the glyoxylate cycle, which operates as an anaplerotic route for replenishing the tricarboxylic acid cycle during growth on fatty acid substrates. The polypeptide is Isocitrate lyase (aceA) (Corynebacterium efficiens (strain DSM 44549 / YS-314 / AJ 12310 / JCM 11189 / NBRC 100395)).